The chain runs to 464 residues: Protein FAM90A24 (464 aa).

Disordered regions lie at residues 1–42 (MMAR…DPRL), 69–389 (VPAT…HDGA), and 415–437 (HSPE…SEAP). Basic and acidic residues-rich tracts occupy residues 74 to 89 (GKKE…KPRG) and 97 to 114 (NKDK…DPQR). Residues 180–197 (LASLSPLRKASLSSSSSL) are compositionally biased toward low complexity.

This sequence belongs to the FAM90 family.

The protein is Protein FAM90A24 of Homo sapiens (Human).